Consider the following 35-residue polypeptide: Photosystem II reaction center protein T (35 aa).

The chain crosses the membrane as a helical span at residues 3-23; the sequence is ALVYTFLLVSTLGIIFFAIFF.

It belongs to the PsbT family. As to quaternary structure, PSII is composed of 1 copy each of membrane proteins PsbA, PsbB, PsbC, PsbD, PsbE, PsbF, PsbH, PsbI, PsbJ, PsbK, PsbL, PsbM, PsbT, PsbY, PsbZ, Psb30/Ycf12, at least 3 peripheral proteins of the oxygen-evolving complex and a large number of cofactors. It forms dimeric complexes.

Its subcellular location is the plastid. The protein resides in the chloroplast thylakoid membrane. Found at the monomer-monomer interface of the photosystem II (PS II) dimer, plays a role in assembly and dimerization of PSII. PSII is a light-driven water plastoquinone oxidoreductase, using light energy to abstract electrons from H(2)O, generating a proton gradient subsequently used for ATP formation. This is Photosystem II reaction center protein T from Ceratophyllum demersum (Rigid hornwort).